We begin with the raw amino-acid sequence, 205 residues long: Arginine exporter protein ArgO (205 aa).

The next 6 helical transmembrane spans lie at 1–21 (MLAVFLQGFALSAAMILPLGP), 42–62 (LCALSDIILICAGIFGGSALL), 67–87 (LLLALVTWGGVAFLLWYGWGA), 111–131 (IIVTLLAVTWLNPHVYLDTFV), 147–167 (WFAFGAVSASVAWFFALALLA), and 182–202 (VINLLVGGVMWFIAFQLARQG).

Belongs to the LysE/ArgO transporter (TC 2.A.75) family.

The protein resides in the cell inner membrane. It carries out the reaction L-arginine(in) = L-arginine(out). Functionally, involved in the export of arginine. Important to control the intracellular level of arginine and the correct balance between arginine and lysine. This Yersinia enterocolitica serotype O:8 / biotype 1B (strain NCTC 13174 / 8081) protein is Arginine exporter protein ArgO.